The chain runs to 509 residues: Ankyrin repeat domain-containing protein 13C (509 aa).

Basic and acidic residues predominate over residues 1-19 (MTGEKIRSLHRDQKPSKDE). Positions 1–42 (MTGEKIRSLHRDQKPSKDEDLLEPDEEATAGGTFTRTGKLKN) are disordered. 3 ANK repeats span residues 79–110 (DAYFPVHECVFKGDIRRLSSLIRSHSIGQKDN), 111–140 (HGNTPLHLAVMLGNKECAHLLLAHNAPVKV), and 144–173 (QGWSPLAEAISYGDRQMITALLRKLKQQSR).

The protein resides in the endoplasmic reticulum membrane. Its function is as follows. Acts as a molecular chaperone for G protein-coupled receptors, regulating their biogenesis and exit from the ER. In Xenopus tropicalis (Western clawed frog), this protein is Ankyrin repeat domain-containing protein 13C (ankrd13c).